Here is a 198-residue protein sequence, read N- to C-terminus: Guanylate kinase (198 aa).

The 187-residue stretch at 6–192 (KSIVIFTGPS…AAQEIREILH (187 aa)) folds into the Guanylate kinase-like domain. 13–20 (GPSGVGKG) contributes to the ATP binding site.

The protein belongs to the guanylate kinase family.

The protein localises to the cytoplasm. It catalyses the reaction GMP + ATP = GDP + ADP. Its function is as follows. Essential for recycling GMP and indirectly, cGMP. This Mycoplasmopsis synoviae (strain 53) (Mycoplasma synoviae) protein is Guanylate kinase.